The primary structure comprises 715 residues: Zinc finger protein 544 (715 aa).

Residues 14-85 (VCFEDVAMAF…EQEAPRDWKA (72 aa)) form the KRAB domain. Glycyl lysine isopeptide (Lys-Gly) (interchain with G-Cter in SUMO2) cross-links involve residues K273 and K289. The C2H2-type 1; atypical zinc finger occupies 354–374 (SVCNQCGKSFSCCKLIHQRTH). 12 C2H2-type zinc fingers span residues 380–402 (FECTQCGKSFSQSYDLVIHQRTH), 408–430 (YECDLCGKSFTQRSKLITHQRIH), 436–458 (YQCIECRKSFRWNSNLIVHQRIH), 464–486 (YECTHCGKSFSQSYELVTHKRTH), 492–514 (FKCTQCGKSFSQKYDLVVHQRTH), 520–542 (YECNLCGKSFSQSSKLITHQRIH), 548–570 (YQCIECGKSFRWNSNLVIHQRIH), 576–598 (YDCTHCGKSFSQSYQLVAHKRTH), 604–626 (YECNECGKAFNRSTQLIRHLQIH), 632–654 (YKCNQCNKAFARSSYLVMHQRTH), 660–682 (FECSQCGKAFSGSSNLLSHHRIH), and 688–710 (YECSDCGKSFRQQSQLVVHRRTH). A Glycyl lysine isopeptide (Lys-Gly) (interchain with G-Cter in SUMO2) cross-link involves residue K534.

This sequence belongs to the krueppel C2H2-type zinc-finger protein family.

It is found in the nucleus. In terms of biological role, may be involved in transcriptional regulation. The sequence is that of Zinc finger protein 544 (ZNF544) from Homo sapiens (Human).